Consider the following 242-residue polypeptide: MIGQRDTVNGAHFGFTDRWGGVSAVPYEELNLGGAVGDDPGAVTANRELAAKSLGVDPARVVWMNQVHGADVAVVDAPWGDRPVPRVDAVVTAERGLALAVLTADCVPVLLADPVSGVAAAAHAGRPGLVAGVVPAAVRAMAELGADPARIVARTGPAVCGRCYEVPEEMRAEVAAVEPAAYAETGWGTPALDVSAGVHAQLERLGVHDRAQSPVCTRESADHFSYRRDRTTGRLAGYVWLD.

Residues His-68, Cys-106, and His-123 each contribute to the Zn(2+) site.

This sequence belongs to the purine nucleoside phosphorylase YfiH/LACC1 family. Homodimer. Requires Cu(2+) as cofactor. It depends on Zn(2+) as a cofactor.

The catalysed reaction is adenosine + phosphate = alpha-D-ribose 1-phosphate + adenine. The enzyme catalyses S-methyl-5'-thioadenosine + phosphate = 5-(methylsulfanyl)-alpha-D-ribose 1-phosphate + adenine. It carries out the reaction inosine + phosphate = alpha-D-ribose 1-phosphate + hypoxanthine. It catalyses the reaction adenosine + H2O + H(+) = inosine + NH4(+). Its function is as follows. Purine nucleoside enzyme that catalyzes the phosphorolysis of adenosine and inosine nucleosides, yielding D-ribose 1-phosphate and the respective free bases, adenine and hypoxanthine. Also catalyzes the phosphorolysis of S-methyl-5'-thioadenosine into adenine and S-methyl-5-thio-alpha-D-ribose 1-phosphate. Also has adenosine deaminase activity. The chain is Purine nucleoside phosphorylase SCO2081 from Streptomyces coelicolor (strain ATCC BAA-471 / A3(2) / M145).